Reading from the N-terminus, the 172-residue chain is Large ribosomal subunit protein uL10 (172 aa).

This sequence belongs to the universal ribosomal protein uL10 family. As to quaternary structure, part of the ribosomal stalk of the 50S ribosomal subunit. The N-terminus interacts with L11 and the large rRNA to form the base of the stalk. The C-terminus forms an elongated spine to which L12 dimers bind in a sequential fashion forming a multimeric L10(L12)X complex.

Forms part of the ribosomal stalk, playing a central role in the interaction of the ribosome with GTP-bound translation factors. The sequence is that of Large ribosomal subunit protein uL10 from Brucella suis (strain ATCC 23445 / NCTC 10510).